A 278-amino-acid polypeptide reads, in one-letter code: HTH-type transcriptional regulator TsaQ1/TsaQ2 (278 aa).

Positions Val-19–Ala-80 constitute an HTH iclR-type domain. A DNA-binding region (H-T-H motif) is located at residues Asn-40–Ser-59. The IclR-ED domain maps to Leu-95–Ala-266.

In terms of biological role, both copies function as additional regulators for the tsa locus, specifically for tsaT. The polypeptide is HTH-type transcriptional regulator TsaQ1/TsaQ2 (tsaQ1) (Comamonas testosteroni (Pseudomonas testosteroni)).